We begin with the raw amino-acid sequence, 234 residues long: Phosphoribosylaminoimidazole-succinocarboxamide synthase (234 aa).

The protein belongs to the SAICAR synthetase family.

It carries out the reaction 5-amino-1-(5-phospho-D-ribosyl)imidazole-4-carboxylate + L-aspartate + ATP = (2S)-2-[5-amino-1-(5-phospho-beta-D-ribosyl)imidazole-4-carboxamido]succinate + ADP + phosphate + 2 H(+). It participates in purine metabolism; IMP biosynthesis via de novo pathway; 5-amino-1-(5-phospho-D-ribosyl)imidazole-4-carboxamide from 5-amino-1-(5-phospho-D-ribosyl)imidazole-4-carboxylate: step 1/2. The chain is Phosphoribosylaminoimidazole-succinocarboxamide synthase from Streptococcus pyogenes serotype M18 (strain MGAS8232).